The sequence spans 332 residues: Glycerol-3-phosphate dehydrogenase [NAD(P)+] (332 aa).

NADPH contacts are provided by Trp15, Arg35, and Lys108. Lys108, Gly137, and Ser139 together coordinate sn-glycerol 3-phosphate. Ala141 is a binding site for NADPH. Sn-glycerol 3-phosphate-binding residues include Lys192, Asp245, Ser255, Arg256, and Asn257. The Proton acceptor role is filled by Lys192. Arg256 serves as a coordination point for NADPH. Leu278 and Glu280 together coordinate NADPH.

This sequence belongs to the NAD-dependent glycerol-3-phosphate dehydrogenase family.

The protein resides in the cytoplasm. It catalyses the reaction sn-glycerol 3-phosphate + NAD(+) = dihydroxyacetone phosphate + NADH + H(+). The enzyme catalyses sn-glycerol 3-phosphate + NADP(+) = dihydroxyacetone phosphate + NADPH + H(+). The protein operates within membrane lipid metabolism; glycerophospholipid metabolism. Functionally, catalyzes the reduction of the glycolytic intermediate dihydroxyacetone phosphate (DHAP) to sn-glycerol 3-phosphate (G3P), the key precursor for phospholipid synthesis. The protein is Glycerol-3-phosphate dehydrogenase [NAD(P)+] of Methylobacterium radiotolerans (strain ATCC 27329 / DSM 1819 / JCM 2831 / NBRC 15690 / NCIMB 10815 / 0-1).